The following is a 96-amino-acid chain: Small ribosomal subunit protein bS6 (96 aa).

This sequence belongs to the bacterial ribosomal protein bS6 family.

Its function is as follows. Binds together with bS18 to 16S ribosomal RNA. This is Small ribosomal subunit protein bS6 from Streptococcus pneumoniae serotype 19F (strain G54).